A 354-amino-acid chain; its full sequence is ATPase GET3 (354 aa).

26–33 (KGGVGKTT) provides a ligand contact to ATP. Residue Asp-57 is part of the active site. Glu-245 and Asn-272 together coordinate ATP. 2 residues coordinate Zn(2+): Cys-285 and Cys-288.

The protein belongs to the arsA ATPase family. As to quaternary structure, homodimer. Component of the Golgi to ER traffic (GET) complex, which is composed of GET1, GET2 and GET3. Within the complex, GET1 and GET2 form a heterotetramer which is stabilized by phosphatidylinositol binding and which binds to the GET3 homodimer. Interacts with the chloride channel protein GEF1.

It localises to the cytoplasm. It is found in the endoplasmic reticulum. The protein localises to the golgi apparatus. ATPase required for the post-translational delivery of tail-anchored (TA) proteins to the endoplasmic reticulum. Recognizes and selectively binds the transmembrane domain of TA proteins in the cytosol. This complex then targets to the endoplasmic reticulum by membrane-bound receptors GET1 and GET2, where the tail-anchored protein is released for insertion. This process is regulated by ATP binding and hydrolysis. ATP binding drives the homodimer towards the closed dimer state, facilitating recognition of newly synthesized TA membrane proteins. ATP hydrolysis is required for insertion. Subsequently, the homodimer reverts towards the open dimer state, lowering its affinity for the GET1-GET2 receptor, and returning it to the cytosol to initiate a new round of targeting. Cooperates with the HDEL receptor ERD2 to mediate the ATP-dependent retrieval of resident ER proteins that contain a C-terminal H-D-E-L retention signal from the Golgi to the ER. Involved in low-level resistance to the oxyanions arsenite and arsenate, and in heat tolerance. The chain is ATPase GET3 from Saccharomyces cerevisiae (strain RM11-1a) (Baker's yeast).